We begin with the raw amino-acid sequence, 162 residues long: NADH-quinone oxidoreductase subunit I (162 aa).

2 consecutive 4Fe-4S ferredoxin-type domains span residues 52–82 (LRRY…IEAG) and 93–122 (TRYD…EGPN). Positions 62, 65, 68, 72, 102, 105, 108, and 112 each coordinate [4Fe-4S] cluster.

The protein belongs to the complex I 23 kDa subunit family. NDH-1 is composed of 14 different subunits. Subunits NuoA, H, J, K, L, M, N constitute the membrane sector of the complex. It depends on [4Fe-4S] cluster as a cofactor.

It localises to the cell inner membrane. It catalyses the reaction a quinone + NADH + 5 H(+)(in) = a quinol + NAD(+) + 4 H(+)(out). Its function is as follows. NDH-1 shuttles electrons from NADH, via FMN and iron-sulfur (Fe-S) centers, to quinones in the respiratory chain. The immediate electron acceptor for the enzyme in this species is believed to be ubiquinone. Couples the redox reaction to proton translocation (for every two electrons transferred, four hydrogen ions are translocated across the cytoplasmic membrane), and thus conserves the redox energy in a proton gradient. The protein is NADH-quinone oxidoreductase subunit I of Xanthobacter autotrophicus (strain ATCC BAA-1158 / Py2).